Consider the following 68-residue polypeptide: Molybdenum-pterin-binding protein 1 (68 aa).

Positions 2 to 68 (SISARNQLKG…IKSTDVMILA (67 aa)) constitute a Mop domain.

In terms of biological role, binds one mole of molybdenum per mole of protein and contains a pterin. The chain is Molybdenum-pterin-binding protein 1 (mopI) from Clostridium pasteurianum.